The chain runs to 158 residues: Protein Smg homolog (158 aa).

This sequence belongs to the Smg family.

The protein is Protein Smg homolog of Vibrio atlanticus (strain LGP32) (Vibrio splendidus (strain Mel32)).